Reading from the N-terminus, the 47-residue chain is uncharacterized protein (47 aa).

2 disordered regions span residues 1 to 20 (MSTDNFEKIKGRPTQKEEWQ) and 25 to 47 (EKEKDENNRLFQEQKQKTTNRKG). Positions 25–40 (EKEKDENNRLFQEQKQ) are enriched in basic and acidic residues.

This is an uncharacterized protein from Dictyostelium discoideum (Social amoeba).